Consider the following 389-residue polypeptide: Gastricsin (389 aa).

An N-terminal signal peptide occupies residues 1–16 (MKWMVVALVCLQLLEA). Residues 17–59 (KVTKVTLKKFKSIRENLREQGLLEDFLKTNHYDPAQKYHFGDF) constitute a propeptide, activation peptide. The Peptidase A1 domain occupies 73–386 (YFGEISIGTP…DMGNNRVGFA (314 aa)). Asp-91 is a catalytic residue. 2 cysteine pairs are disulfide-bonded: Cys-104–Cys-109 and Cys-268–Cys-272. Residue Asp-277 is part of the active site. Residues Cys-311 and Cys-344 are joined by a disulfide bond.

It belongs to the peptidase A1 family.

The protein resides in the secreted. It carries out the reaction More restricted specificity than pepsin A, but shows preferential cleavage at Tyr-|-Xaa bonds. High activity on hemoglobin.. Hydrolyzes a variety of proteins. The polypeptide is Gastricsin (PGC) (Suncus murinus (Asian house shrew)).